Here is a 308-residue protein sequence, read N- to C-terminus: MTQTSNSQYLVILYYQYAPIKDPQTFRDQHFKYCESIGLLGRIIVAQEGINGTLSGPEEQIHKYMDQLKQDPRFCNTVFKMETVEAHVFPRLSIKVKPELVNLSLQENVDLTKDKGAYLAPQEFLQALQEKDTLILDARNDYEYDLGHFRNAVNPNIRHFRDLPNWVKQNTHLLKDKKIVTYCTGGVRCEKFSTFLKKEGFDDVYQLEGGIISYGKHPETQGALWDGQMYVFDQRIAVPVNQKEHVIVGKDYFDGTPCERYINCSNPQCNKQILCHEYNEHKYLGACSDKCSNHPQNRYLKKHNNPNS.

The 95-residue stretch at 129 to 223 (QEKDTLILDA…YGKHPETQGA (95 aa)) folds into the Rhodanese domain. Cys-183 functions as the Cysteine persulfide intermediate in the catalytic mechanism.

This sequence belongs to the TrhO family.

The catalysed reaction is uridine(34) in tRNA + AH2 + O2 = 5-hydroxyuridine(34) in tRNA + A + H2O. Functionally, catalyzes oxygen-dependent 5-hydroxyuridine (ho5U) modification at position 34 in tRNAs. The polypeptide is tRNA uridine(34) hydroxylase (Onion yellows phytoplasma (strain OY-M)).